A 234-amino-acid polypeptide reads, in one-letter code: Coiled-coil domain-containing protein 194 (234 aa).

The first 42 residues, 1-42, serve as a signal peptide directing secretion; it reads MAEPGPEPGRAWRVLALCGVAVFLAAAAAGGALVAWNLAASA. Disordered regions lie at residues 44-67 and 187-234; these read RGPR…PGVD and VLEA…RARG. The stretch at 66 to 163 forms a coiled coil; sequence VDDLRRRLAE…TRRLDEALRR (98 aa). Residues 187 to 196 are compositionally biased toward low complexity; that stretch reads VLEAEMSPQR. A compositionally biased stretch (basic residues) spans 197–217; that stretch reads RVPRPRPRSGSRPRPSPRSRS.

The polypeptide is Coiled-coil domain-containing protein 194 (Homo sapiens (Human)).